A 303-amino-acid polypeptide reads, in one-letter code: MDDVPFLKGHATRNDFVILPDHDDELELDAALVRAICDRRRGLGADGILRVVAVPADDAPVSSAGATADAAAGRPPQPSAGRPPQPAAARWFMDYRNADGSVAEICGNGIRLFARYLVDAGLEEAGRFLVGTRIGPVPVDVPPAGDVTAWLPAPELRGGGRARFDGRMLEGVRVSVGNPHLVCVVDTLADVDFTRAPVLDSDEFPDGANVEVVEIERPGVLRMRVYERGVGETWSCGSGACAVAAVAEGAERIPRPADGWWRIVVPGGELRIRFDGDRVALAGPAVVVAEGRLHLAALEKSDG.

Position 14 (Asn-14) interacts with substrate. Over residues Pro-60–Arg-74 the composition is skewed to low complexity. Residues Pro-60–Pro-86 are disordered. The segment covering Pro-75 to Pro-86 has biased composition (pro residues). Asn-97 lines the substrate pocket. Cys-106 functions as the Proton donor in the catalytic mechanism. Substrate is bound by residues Gly-107 to Asn-108, Asn-178, Asn-209, and Glu-227 to Arg-228. Cys-236 acts as the Proton acceptor in catalysis. Residue Gly-237–Ser-238 coordinates substrate.

The protein belongs to the diaminopimelate epimerase family. Homodimer.

Its subcellular location is the cytoplasm. The enzyme catalyses (2S,6S)-2,6-diaminopimelate = meso-2,6-diaminopimelate. It functions in the pathway amino-acid biosynthesis; L-lysine biosynthesis via DAP pathway; DL-2,6-diaminopimelate from LL-2,6-diaminopimelate: step 1/1. In terms of biological role, catalyzes the stereoinversion of LL-2,6-diaminopimelate (L,L-DAP) to meso-diaminopimelate (meso-DAP), a precursor of L-lysine and an essential component of the bacterial peptidoglycan. In Acidothermus cellulolyticus (strain ATCC 43068 / DSM 8971 / 11B), this protein is Diaminopimelate epimerase.